The primary structure comprises 853 residues: MATAEVGGGGGEGDAAAAAVARAGGGGGGGGGGGEDALFTELWSACAGPLVTVPRVGEKVFYFPQGHIEQVEASTNQVGEQRMQLYNLPWKILCEVMNVELKAEPDTDEVYAQLTLLPESKQQEDNGSTEEEVPSAPAAGHVRPRVHSFCKTLTASDTSTHGGFSVLRRHADECLPPLDMSRQPPTQELVAKDLHGVEWRFRHIFRGQPRRHLLQSGWSVFVSAKRLVAGDAFIFLRGENGELRVGVRRAMRQQTNVPSSVISSHSMHLGVLATAWHAVNTGTMFTVYYKPRTSPAEFVVPYDRYMESLKQNYSIGMRFKMRFEGEEAPEQRFTGTIVGMGDSDPAGWPESKWRSLKVRWDEASSIPRPERVSPWQIEPAVSPPPVNPLPVPRTKRLRPNATALPADSSAIAKEAATKVVVESEPNGTQRTFQTQENATPKSGFGNSSELESAQKSIMRPSGFDREKNNTPIQWKLGSDGRMQMSKPESYSEMLSGFQPPKDVQIPQGFCSLPEQITAGHSNFWHTVNAQYQDQQSNHNMFPSSWSFMPPNTRLGLNKQNYSMIQEAGVLSQRPGNTKFGNGVYAALPGRGTEQYSGGWFGHMMPNSHMDDTQPRLIKPKPLVVAHGDVQKAKGASCKLFGIHLDSPAKSEPLKSPSSVVYDGTPQTPGATEWRRPDVTEVEKCSDPSKAMKPLDTPQPDSVPEKPSSQQASRNMSCKSQGVSTRSCKKVHKQGIALGRSVDLTKFNGYEELIAELDDMFDFNGELKGPKKEWMVVYTDNEGDMMLVGDDPWIEFCDMVHKIFIYTREEVQRMNPGTLNSRSEDSHANSMERGSVGREMRGCLSTSSLNSENC.

Residues Pro-118–His-141 form a disordered region. The TF-B3 DNA-binding region spans Phe-149 to Met-251. 2 disordered regions span residues Glu-422 to Met-484 and Pro-647 to Ser-723. A compositionally biased stretch (polar residues) spans Pro-425 to Lys-455. Residues Glu-672–Asp-686 show a composition bias toward basic and acidic residues. The segment covering Pro-706 to Ser-723 has biased composition (polar residues). Residues Arg-725–Glu-809 enclose the PB1 domain. The segment at Pro-815 to Cys-853 is disordered. Over residues Leu-843–Cys-853 the composition is skewed to polar residues.

This sequence belongs to the ARF family. In terms of assembly, homodimers and heterodimers. Interacts with CRL1. Expressed in roots, culms, leaves and young panicles.

The protein localises to the nucleus. Functionally, auxin response factors (ARFs) are transcriptional factors that bind specifically to the DNA sequence 5'-TGTCTC-3' found in the auxin-responsive promoter elements (AuxREs). The chain is Auxin response factor 23 (ARF23) from Oryza sativa subsp. japonica (Rice).